Reading from the N-terminus, the 1643-residue chain is Neurexin-3 (1643 aa).

The first 27 residues, 1–27, serve as a signal peptide directing secretion; it reads MSSTLHSVFFTLKVSILLGSLLGLCLG. A Laminin G-like 1 domain is found at 28-202; sequence LEFMGLPNQW…GVQMDAEGPC (175 aa). Over 28-1568 the chain is Extracellular; sequence LEFMGLPNQW…EVIRESSSTT (1541 aa). N58 and N105 each carry an N-linked (GlcNAc...) asparagine glycan. The EGF-like 1 domain occupies 198 to 235; sequence AEGPCGERPCENGGICFLLDGHPTCDCSTTGYGGKLCS. 3 disulfide bridges follow: C202–C213, C207–C222, and C224–C234. Laminin G-like domains are found at residues 258 to 440 and 447 to 639; these read VATF…VFKC and DPIN…KSSC. The Ca(2+) site is built by D304, L321, and M374. Cystine bridges form between C404–C440, C610–C639, C647–C658, C652–C667, and C669–C679. The 38-residue stretch at 643–680 folds into the EGF-like 2 domain; sequence SAKQCDSYPCKNNAVCKDGWNRFICDCTGTGYWGRTCE. 2 consecutive Laminin G-like domains span residues 685–857 and 871–1046; these read ILSY…IDYC and DPVT…ERGC. Ca(2+) is bound by residues D732 and L749. A glycan (N-linked (GlcNAc...) asparagine) is linked at N757. A Ca(2+)-binding site is contributed by R807. Disulfide bonds link C1018-C1046, C1053-C1064, C1058-C1073, and C1075-C1085. The 38-residue stretch at 1049–1086 folds into the EGF-like 3 domain; that stretch reads PSTTCQEDSCANQGVCMQQWEGFTCDCSMTSYSGNQCN. The region spanning 1090–1260 is the Laminin G-like 6 domain; that stretch reads ATYIFGKSGG…NPNIKINGSV (171 aa). 2 residues coordinate Ca(2+): D1142 and I1159. N-linked (GlcNAc...) asparagine glycosylation is present at N1189. Ca(2+) contacts are provided by I1211 and N1213. N-linked (GlcNAc...) asparagine glycans are attached at residues N1257 and N1301. The tract at residues 1294-1318 is disordered; the sequence is ATTTTRKNRSTASIQPTSDDLVSSA. Polar residues predominate over residues 1303–1318; it reads STASIQPTSDDLVSSA. S1317 is a glycosylation site (O-linked (Xyl...) (heparan sulfate) serine). The chain crosses the membrane as a helical span at residues 1569 to 1589; it reads GMVVGIVAAAALCILILLYAM. Residues 1590 to 1643 are Cytoplasmic-facing; the sequence is YKYRNRDEGSYQVDETRNYISNSAQSNGTLMKEKQQSSKSGHKKQKNKDREYYV. The segment at 1611 to 1643 is disordered; sequence NSAQSNGTLMKEKQQSSKSGHKKQKNKDREYYV.

Belongs to the neurexin family. In terms of assembly, the laminin G-like domain 2 binds to NXPH1. Specific isoforms bind to alpha-dystroglycan. The cytoplasmic C-terminal region binds to CASK. Specific isoforms bind neuroligins NLGN1, NLGN2 and NLGN3. Interacts with CLSTN3. O-glycosylated; contains heparan sulfate. Heparan sulfate attachment is required for synapse development by mediating interactions with neuroligins. In terms of tissue distribution, expressed in the blood vessel walls (at protein level). Highly expressed in brain, lung, and pancreas; a lower level of expression is detectable in heart, placenta, liver, and kidney, whereas no expression can be observed in skeletal muscle. Isoform 4a is heart-specific.

Its subcellular location is the presynaptic cell membrane. Neuronal cell surface protein that may be involved in cell recognition and cell adhesion. May mediate intracellular signaling. The sequence is that of Neurexin-3 (NRXN3) from Homo sapiens (Human).